We begin with the raw amino-acid sequence, 125 residues long: uncharacterized protein (125 aa).

This is an uncharacterized protein from Aquifex aeolicus (strain VF5).